Consider the following 581-residue polypeptide: ATP-dependent RNA helicase DBP3 (581 aa).

The tract at residues 1–118 (MAATKHSLAD…ASSNSEAPSS (118 aa)) is disordered. Basic and acidic residues-rich tracts occupy residues 7-35 (SLAD…EKRE) and 53-62 (DADRAAEKER). A compositionally biased stretch (basic residues) spans 63 to 73 (KKAKKAKKLEK). 2 stretches are compositionally biased toward low complexity: residues 80–89 (AEASAEPAAE) and 106–118 (TTEA…APSS). The Q motif motif lies at 160 to 189 (LEFHQLPATNLLEKKPSPFANYKAPTPIQS). Residues 192–365 (WPFTLSGRDV…ATFMVSPVKI (174 aa)) form the Helicase ATP-binding domain. 205–212 (AETGSGKT) contributes to the ATP binding site. The DEAD box signature appears at 311-314 (DEAD). Residues 402-551 (RLLEVLKEHQ…PVPEDLLKFG (150 aa)) enclose the Helicase C-terminal domain.

This sequence belongs to the DEAD box helicase family. DDX5/DBP2 subfamily.

The protein localises to the nucleus. It is found in the nucleolus. It catalyses the reaction ATP + H2O = ADP + phosphate + H(+). Functionally, ATP-dependent RNA helicase required for 60S ribosomal subunit synthesis. Involved in efficient pre-rRNA processing, predominantly at site A3, which is necessary for the normal formation of 25S and 5.8S rRNAs. This is ATP-dependent RNA helicase DBP3 (DBP3) from Gibberella zeae (strain ATCC MYA-4620 / CBS 123657 / FGSC 9075 / NRRL 31084 / PH-1) (Wheat head blight fungus).